The following is a 310-amino-acid chain: S-adenosylmethionine-dependent nucleotide dehydratase (310 aa).

Residues 3-221 (PAIPPTINLH…VERHRKVESS (219 aa)) enclose the Radical SAM core domain. [4Fe-4S] cluster-binding residues include C17, C21, and C24.

Belongs to the radical SAM superfamily. Viperin family. Requires [4Fe-4S] cluster as cofactor.

The enzyme catalyses GTP + AH2 + S-adenosyl-L-methionine = 3'-deoxy-3',4'-didehydro-GTP + 5'-deoxyadenosine + L-methionine + A + H2O + H(+). In terms of biological role, expression of pVip15 in E.coli (strain MG1655) confers resistance to phage T7; prevents culture collapse upon infection. Catalyzes the conversion of guanosine triphosphate (GTP) to 3'-deoxy-3',4'-didehydro-GTP (ddhGTP), probably via a SAM-dependent radical mechanism. The modified nucleotide represses transcription from T7 RNA polymerase-directed genes (possibly by acting as chain terminators), strongly suggesting these nucleotides block viral polymerase transcription. The sequence is that of S-adenosylmethionine-dependent nucleotide dehydratase from Coraliomargarita akajimensis (strain DSM 45221 / IAM 15411 / JCM 23193 / KCTC 12865 / 04OKA010-24).